The chain runs to 554 residues: Urocanate hydratase (554 aa).

NAD(+)-binding positions include 51-52 (GG), Gln129, 175-177 (GMG), Glu195, 241-242 (NA), 262-266 (QTSAH), 272-273 (YL), and Tyr321. Residue Cys409 is part of the active site. An NAD(+)-binding site is contributed by Gly491.

It belongs to the urocanase family. NAD(+) is required as a cofactor.

It is found in the cytoplasm. The enzyme catalyses 4-imidazolone-5-propanoate = trans-urocanate + H2O. It participates in amino-acid degradation; L-histidine degradation into L-glutamate; N-formimidoyl-L-glutamate from L-histidine: step 2/3. Catalyzes the conversion of urocanate to 4-imidazolone-5-propionate. The sequence is that of Urocanate hydratase from Methylobacterium nodulans (strain LMG 21967 / CNCM I-2342 / ORS 2060).